Here is a 252-residue protein sequence, read N- to C-terminus: 3-dehydroquinate dehydratase (252 aa).

Residues Ser-21, 46 to 48 (EWR), and Arg-82 contribute to the 3-dehydroquinate site. Catalysis depends on His-143, which acts as the Proton donor/acceptor. Lys-170 (schiff-base intermediate with substrate) is an active-site residue. The 3-dehydroquinate site is built by Arg-213, Ser-232, and Gln-236.

It belongs to the type-I 3-dehydroquinase family. As to quaternary structure, homodimer.

The enzyme catalyses 3-dehydroquinate = 3-dehydroshikimate + H2O. Its pathway is metabolic intermediate biosynthesis; chorismate biosynthesis; chorismate from D-erythrose 4-phosphate and phosphoenolpyruvate: step 3/7. Its function is as follows. Involved in the third step of the chorismate pathway, which leads to the biosynthesis of aromatic amino acids. Catalyzes the cis-dehydration of 3-dehydroquinate (DHQ) and introduces the first double bond of the aromatic ring to yield 3-dehydroshikimate. This Escherichia coli (strain SE11) protein is 3-dehydroquinate dehydratase.